The sequence spans 274 residues: MQNITQSWFVQGMIKATTDAWLKGWDERNGGNLTLRLDDADIAPYHDNFHAQPRYIPLSQPMPLLANTPFIVTGSGKFFRNVQLDPAANLGVVKVDSDGAGYHILWGLTHEAVPTSELPAHFLSHCERIKATNGKDRVIMHCHATNLIALTYVLENDTAVFTRQLWEGSTECLVVFPDGVGILPWMVPGTDEIGQATAQEMQKHSLVLWPFHGVFGSGPTLDEAFGLIDTAEKSAEVLVKIYSMGGMKQTITREELIALGERFGVTPLASALAL.

The active site involves glutamate 117. Histidine 141, histidine 143, and histidine 212 together coordinate Zn(2+).

It belongs to the aldolase class II family. RhaD subfamily. In terms of assembly, homotetramer. It depends on Zn(2+) as a cofactor.

It is found in the cytoplasm. It catalyses the reaction L-rhamnulose 1-phosphate = (S)-lactaldehyde + dihydroxyacetone phosphate. It participates in carbohydrate degradation; L-rhamnose degradation; glycerone phosphate from L-rhamnose: step 3/3. Its function is as follows. Catalyzes the reversible cleavage of L-rhamnulose-1-phosphate to dihydroxyacetone phosphate (DHAP) and L-lactaldehyde. This is Rhamnulose-1-phosphate aldolase from Escherichia fergusonii (strain ATCC 35469 / DSM 13698 / CCUG 18766 / IAM 14443 / JCM 21226 / LMG 7866 / NBRC 102419 / NCTC 12128 / CDC 0568-73).